The chain runs to 277 residues: S-formylglutathione hydrolase FrmB (277 aa).

Catalysis depends on charge relay system residues S145, D221, and H254.

It belongs to the esterase D family.

It carries out the reaction S-formylglutathione + H2O = formate + glutathione + H(+). Functionally, serine hydrolase involved in the detoxification of formaldehyde. Hydrolyzes S-formylglutathione to glutathione and formate. This chain is S-formylglutathione hydrolase FrmB (frmB), found in Escherichia coli (strain SMS-3-5 / SECEC).